The following is a 476-amino-acid chain: Bifunctional protein HldE (476 aa).

Positions 1-318 (MKPILPDYNN…AEAIHGSRDT (318 aa)) are ribokinase. Residue 195–198 (NMSE) coordinates ATP. The active site involves Asp-264. The cytidylyltransferase stretch occupies residues 344–476 (MTNGCFDILH…IIDAIKGGRG (133 aa)).

In the N-terminal section; belongs to the carbohydrate kinase PfkB family. The protein in the C-terminal section; belongs to the cytidylyltransferase family. Homodimer.

The catalysed reaction is D-glycero-beta-D-manno-heptose 7-phosphate + ATP = D-glycero-beta-D-manno-heptose 1,7-bisphosphate + ADP + H(+). It catalyses the reaction D-glycero-beta-D-manno-heptose 1-phosphate + ATP + H(+) = ADP-D-glycero-beta-D-manno-heptose + diphosphate. Its pathway is nucleotide-sugar biosynthesis; ADP-L-glycero-beta-D-manno-heptose biosynthesis; ADP-L-glycero-beta-D-manno-heptose from D-glycero-beta-D-manno-heptose 7-phosphate: step 1/4. The protein operates within nucleotide-sugar biosynthesis; ADP-L-glycero-beta-D-manno-heptose biosynthesis; ADP-L-glycero-beta-D-manno-heptose from D-glycero-beta-D-manno-heptose 7-phosphate: step 3/4. It functions in the pathway bacterial outer membrane biogenesis; LPS core biosynthesis. Catalyzes the phosphorylation of D-glycero-D-manno-heptose 7-phosphate at the C-1 position to selectively form D-glycero-beta-D-manno-heptose-1,7-bisphosphate. In terms of biological role, catalyzes the ADP transfer from ATP to D-glycero-beta-D-manno-heptose 1-phosphate, yielding ADP-D-glycero-beta-D-manno-heptose. The sequence is that of Bifunctional protein HldE from Vibrio vulnificus (strain YJ016).